Here is a 473-residue protein sequence, read N- to C-terminus: MMKGLIGYRFSPTGEEVINHYLKNKLLGKYWLVDEAISEINILSHKPSKDLPKLARIQSEDLEWYFFSPIEYTNPNKMKMKRTTGSGFWKPTGVDREIRDKRGNGVVIGIKKTLVYHEGKSPHGVRTPWVMHEYHITCLPHHKRKYVVCQVKYKGEAAEISYEPSPSLVSDSHTVIAITGEPEPELQVEQPGKENLLGMSVDDLIEPMNQQEEPQGPHLAPNDDEFIRGLRHVDRGTVEYLFANEENMDGLSMNDLRIPMIVQQEDLSEWEGFNADTFFSDNNNNYNLNVHHQLTPYGDGYLNAFSGYNEGNPPDHELVMQENRNDHMPRKPVTGTIDYSSDSGSDAGSISTTSYQGTSSPNISVGSSSRHLSSCSSTDSCKDLQTCTDPSIISREIRELTQEVKQEIPRAVDAPMNNESSLVKTEKKGLFIVEDAMERNRKKPRFIYLMKMIIGNIISVLLPVKRLIPVKKL.

The 151-residue stretch at 4–154 (GLIGYRFSPT…KYVVCQVKYK (151 aa)) folds into the NAC domain. A DNA-binding region spans residues 108–160 (IGIKKTLVYHEGKSPHGVRTPWVMHEYHITCLPHHKRKYVVCQVKYKGEAAEI). The interval 326-380 (DHMPRKPVTGTIDYSSDSGSDAGSISTTSYQGTSSPNISVGSSSRHLSSCSSTDS) is disordered. Composition is skewed to low complexity over residues 340 to 354 (SSDSGSDAGSISTTS) and 364 to 379 (SVGSSSRHLSSCSSTD). Residues 446–468 (FIYLMKMIIGNIISVLLPVKRLI) traverse the membrane as a helical segment.

The protein resides in the membrane. It is found in the nucleus. Transcription activator activated by proteolytic cleavage through regulated intramembrane proteolysis (RIP) mediated by calpain or its functional homolog. Regulates cytokinin signaling during cell division. The sequence is that of NAC domain-containing protein 68 (NAC68) from Arabidopsis thaliana (Mouse-ear cress).